The primary structure comprises 555 residues: Adenine deaminase (555 aa).

Belongs to the metallo-dependent hydrolases superfamily. Adenine deaminase family. Requires Mn(2+) as cofactor.

It carries out the reaction adenine + H2O + H(+) = hypoxanthine + NH4(+). This chain is Adenine deaminase, found in Methanosarcina mazei (strain ATCC BAA-159 / DSM 3647 / Goe1 / Go1 / JCM 11833 / OCM 88) (Methanosarcina frisia).